The sequence spans 523 residues: 3-hydroxybenzoate--CoA/4-hydroxybenzoate--CoA ligase (523 aa).

This sequence belongs to the ATP-dependent AMP-binding enzyme family. Benzoate-CoA ligase subfamily.

The enzyme catalyses 4-hydroxybenzoate + ATP + CoA = 4-hydroxybenzoyl-CoA + AMP + diphosphate. The catalysed reaction is 3-hydroxybenzoate + ATP + CoA = 3-hydroxybenzoyl-CoA + AMP + diphosphate. Functionally, catalyzes the ligation of 3-hydroxybenzoate or 4-hydroxybenzoate and CoA at the expense of ATP. The enzyme shows low activity towards benzoate, 4-aminobenzoate, 3-aminobenzoate, 3-fluorobenzoate, 4-fluorobenzoate, 3-chlorobenzoate, and 4-chlorobenzoate. There is no activity with 3,4-dihydroxybenzoate, 2,3-dihydroxybenzoate, and 2-hydroxybenzoate as substrates. In Thauera aromatica, this protein is 3-hydroxybenzoate--CoA/4-hydroxybenzoate--CoA ligase (hcl).